Reading from the N-terminus, the 689-residue chain is MIPNQRQNLVSILRVCTRKGLSDQGGQVHCYLLKSGSGLNLITSNYLIDMYCKCREPLMAYKVFDSMPERNVVSWSALMSGHVLNGDLKGSLSLFSEMGRQGIYPNEFTFSTNLKACGLLNALEKGLQIHGFCLKIGFEMMVEVGNSLVDMYSKCGRINEAEKVFRRIVDRSLISWNAMIAGFVHAGYGSKALDTFGMMQEANIKERPDEFTLTSLLKACSSTGMIYAGKQIHGFLVRSGFHCPSSATITGSLVDLYVKCGYLFSARKAFDQIKEKTMISWSSLILGYAQEGEFVEAMGLFKRLQELNSQIDSFALSSIIGVFADFALLRQGKQMQALAVKLPSGLETSVLNSVVDMYLKCGLVDEAEKCFAEMQLKDVISWTVVITGYGKHGLGKKSVRIFYEMLRHNIEPDEVCYLAVLSACSHSGMIKEGEELFSKLLETHGIKPRVEHYACVVDLLGRAGRLKEAKHLIDTMPIKPNVGIWQTLLSLCRVHGDIELGKEVGKILLRIDAKNPANYVMMSNLYGQAGYWNEQGNARELGNIKGLKKEAGMSWVEIEREVHFFRSGEDSHPLTPVIQETLKEAERRLREELGYVYGLKHELHDIDDESKEENLRAHSEKLAIGLALATGGLNQKGKTIRVFKNLRVCVDCHEFIKGLSKITKIAYVVRDAVRFHSFEDGCCSCGDYW.

14 PPR repeats span residues 5–39 (QRQN…GSGL), 40–70 (NLIT…MPER), 71–105 (NVVS…GIYP), 106–140 (NEFT…GFEM), 141–171 (MVEV…IVDR), 172–206 (SLIS…NIKE), 209–243 (DEFT…GFHC), 246–276 (SATI…IKEK), 277–311 (TMIS…NSQI), 312–342 (DSFA…AVKL), 347–377 (ETSV…MQLK), 378–412 (DVIS…NIEP), 413–448 (DEVC…GIKP), and 449–479 (RVEH…MPIK). Residues 484 to 559 (IWQTLLSLCR…EAGMSWVEIE (76 aa)) are type E motif. The type E(+) motif stretch occupies residues 560 to 590 (REVHFFRSGEDSHPLTPVIQETLKEAERRLR). A type DYW motif region spans residues 592-689 (ELGYVYGLKH…DGCCSCGDYW (98 aa)).

The protein belongs to the PPR family. PCMP-H subfamily.

The chain is Putative pentatricopeptide repeat-containing protein At3g15130 (PCMP-H86) from Arabidopsis thaliana (Mouse-ear cress).